The chain runs to 859 residues: Low-density lipoprotein receptor-related protein 12 (859 aa).

A signal peptide spans 1–32; sequence MACRWSTKESPRWRSALLLLFLAGVYGNGALA. The Extracellular segment spans residues 33–492; sequence EHSENVHISG…ENCPVIVPTR (460 aa). 2 disulfides stabilise this stretch: Cys-47-Cys-76 and Cys-103-Cys-122. A CUB 1 domain is found at 47–159; the sequence is CGETPEQIRA…KGFRLAYFSG (113 aa). An N-linked (GlcNAc...) asparagine glycan is attached at Asn-75. N-linked (GlcNAc...) asparagine glycosylation occurs at Asn-146. LDL-receptor class A domains lie at 165 to 201 and 214 to 255; these read NCAC…EICA and PCAY…IDCD. 7 disulfides stabilise this stretch: Cys-166/Cys-178, Cys-173/Cys-191, Cys-185/Cys-200, Cys-215/Cys-232, Cys-222/Cys-245, Cys-239/Cys-254, and Cys-259/Cys-285. The CUB 2 domain maps to 259 to 372; that stretch reads CGQWLKYFYG…RGFNATYQVD (114 aa). N-linked (GlcNAc...) asparagine glycosylation is found at Asn-284 and Asn-366. LDL-receptor class A domains follow at residues 374–411, 412–449, and 450–486; these read FCLP…TNCT, MCQK…KNCF, and FCQP…ENCP. 9 cysteine pairs are disulfide-bonded: Cys-375-Cys-388, Cys-382-Cys-401, Cys-395-Cys-410, Cys-413-Cys-426, Cys-420-Cys-439, Cys-433-Cys-448, Cys-451-Cys-463, Cys-458-Cys-476, and Cys-470-Cys-485. A glycan (N-linked (GlcNAc...) asparagine) is linked at Asn-409. The N-linked (GlcNAc...) asparagine glycan is linked to Asn-441. The chain crosses the membrane as a helical span at residues 493–513; sequence VITAAVIGSLICGLLLVIALG. Residues 514–859 lie on the Cytoplasmic side of the membrane; it reads CTCKLYSLRM…TSDDEALLLC (346 aa). 4 disordered regions span residues 623–678, 693–723, 748–770, and 801–823; these read ADGD…LPQK, ASSS…SPAR, SSLS…REDD, and DQGQ…SNRD. 2 stretches are compositionally biased toward polar residues: residues 748–757 and 801–814; these read SSLSQNQSPL and DQGQ…NATN.

Belongs to the LDLR family. As to quaternary structure, may interact with RACK1, ZFYVE9 and NMRK2. Widely expressed in heart, skeletal muscle, brain, lung, placenta and pancreas, but not in tissues consisting of a large number of epithelial cells, such as liver and kidney. Expressed at very low levels in a number of tumor-derived cell lines.

Its subcellular location is the membrane. It is found in the coated pit. In terms of biological role, probable receptor, which may be involved in the internalization of lipophilic molecules and/or signal transduction. May act as a tumor suppressor. The protein is Low-density lipoprotein receptor-related protein 12 (LRP12) of Homo sapiens (Human).